Reading from the N-terminus, the 580-residue chain is Cytochrome c oxidase subunit 1 (580 aa).

Positions 1–25 (MTAVAPRVDGHVAPQRPEPTGHARK) are disordered. Residues 43–63 (IMYIIMSFSFFFLGGLMALLI) traverse the membrane as a helical segment. Residue His87 participates in Fe(II)-heme a binding. 6 consecutive transmembrane segments (helical) span residues 90–110 (VMLL…VLPL), 122–142 (LNAF…AGFL), 171–191 (MWII…INML), 214–234 (IFVT…AALG), 259–279 (LFWF…FGII), and 292–312 (FGYI…MAVW). 2 residues coordinate Cu cation: His265 and Tyr269. A cross-link (1'-histidyl-3'-tyrosine (His-Tyr)) is located at residues 265–269 (HPEVY). Residues His314 and His315 each coordinate Cu cation. Helical transmembrane passes span 316–336 (MFVT…LISV) and 360–380 (MIWA…GIML). His398 contacts heme a3. 3 helical membrane passes run 399 to 419 (FHYT…YFWF), 434 to 454 (IHFW…HWLG), and 477 to 497 (ISTI…WNVF). His400 serves as a coordination point for Fe(II)-heme a.

The protein belongs to the heme-copper respiratory oxidase family. As to quaternary structure, associates with subunits II, III and IV to form cytochrome c oxidase. The cofactor is Cu(2+). It depends on heme as a cofactor.

It localises to the cell membrane. The catalysed reaction is 4 Fe(II)-[cytochrome c] + O2 + 8 H(+)(in) = 4 Fe(III)-[cytochrome c] + 2 H2O + 4 H(+)(out). The protein operates within energy metabolism; oxidative phosphorylation. Cytochrome c oxidase is the component of the respiratory chain that catalyzes the reduction of oxygen to water. Subunits 1-3 form the functional core of the enzyme complex. CO I is the catalytic subunit of the enzyme. Electrons originating in cytochrome c are transferred via the copper A center of subunit 2 and heme A of subunit 1 to the bimetallic center formed by heme A3 and copper B. The protein is Cytochrome c oxidase subunit 1 (ctaD) of Corynebacterium efficiens (strain DSM 44549 / YS-314 / AJ 12310 / JCM 11189 / NBRC 100395).